The primary structure comprises 359 residues: Phosphate acyltransferase (359 aa).

The disordered stretch occupies residues 335 to 359 (SGAGGAATGSPETDAPNPHPDSRAA).

It belongs to the PlsX family. As to quaternary structure, homodimer. Probably interacts with PlsY.

It localises to the cytoplasm. The enzyme catalyses a fatty acyl-[ACP] + phosphate = an acyl phosphate + holo-[ACP]. The protein operates within lipid metabolism; phospholipid metabolism. Its function is as follows. Catalyzes the reversible formation of acyl-phosphate (acyl-PO(4)) from acyl-[acyl-carrier-protein] (acyl-ACP). This enzyme utilizes acyl-ACP as fatty acyl donor, but not acyl-CoA. The polypeptide is Phosphate acyltransferase (Cupriavidus metallidurans (strain ATCC 43123 / DSM 2839 / NBRC 102507 / CH34) (Ralstonia metallidurans)).